Here is a 289-residue protein sequence, read N- to C-terminus: ATP synthase subunit a (289 aa).

A run of 6 helical transmembrane segments spans residues 43-63, 101-121, 160-180, 193-213, 232-252, and 259-279; these read AFHVDTLGWSVALGLIFVLIF, SAVIAPLALTIFVWVFLMNAV, LSVFALIIFYSIKVKGIGGFI, LFVQALLIPVNFLLEFVTLIA, VFILIAVMFGSGLLWLSGLGV, and AVFHILIITLQAFIFMMLTIV.

Belongs to the ATPase A chain family. As to quaternary structure, F-type ATPases have 2 components, CF(1) - the catalytic core - and CF(0) - the membrane proton channel. CF(1) has five subunits: alpha(3), beta(3), gamma(1), delta(1), epsilon(1). CF(0) has three main subunits: a(1), b(2) and c(9-12). The alpha and beta chains form an alternating ring which encloses part of the gamma chain. CF(1) is attached to CF(0) by a central stalk formed by the gamma and epsilon chains, while a peripheral stalk is formed by the delta and b chains.

It localises to the cell inner membrane. Functionally, key component of the proton channel; it plays a direct role in the translocation of protons across the membrane. The sequence is that of ATP synthase subunit a from Pseudomonas syringae pv. syringae (strain B728a).